Consider the following 499-residue polypeptide: Maturase K (499 aa).

This sequence belongs to the intron maturase 2 family. MatK subfamily.

It localises to the plastid. Its subcellular location is the chloroplast. Its function is as follows. Usually encoded in the trnK tRNA gene intron. Probably assists in splicing its own and other chloroplast group II introns. The chain is Maturase K from Camellia sinensis (Tea plant).